The following is a 106-amino-acid chain: Small ribosomal subunit protein uS10 (106 aa).

Belongs to the universal ribosomal protein uS10 family. Part of the 30S ribosomal subunit.

Involved in the binding of tRNA to the ribosomes. The polypeptide is Small ribosomal subunit protein uS10 (Mesomycoplasma hyopneumoniae (strain 232) (Mycoplasma hyopneumoniae)).